We begin with the raw amino-acid sequence, 226 residues long: Cobalt transport protein CbiM 1 (226 aa).

The next 6 helical transmembrane spans lie at 6-26 (GFLPVEHAIGWSVASAPVVAY), 43-63 (MLLGVAAAFTFVLSALKMPSV), 75-95 (LGAILFGPSAVAPIGAVVLLF), 107-127 (TLGANIFSMAIVGPFAAAAVF), 135-155 (FPFGVGVFLAASLGDLLTYVT), and 181-201 (VFALTQIPLAISEGLLTVVVM).

It belongs to the CbiM family. As to quaternary structure, forms an energy-coupling factor (ECF) transporter complex composed of an ATP-binding protein (A component, CbiO), a transmembrane protein (T component, CbiQ) and 2 possible substrate-capture proteins (S components, CbiM and CbiN) of unknown stoichimetry.

The protein resides in the cell inner membrane. It functions in the pathway cofactor biosynthesis; adenosylcobalamin biosynthesis. Its function is as follows. Part of the energy-coupling factor (ECF) transporter complex CbiMNOQ involved in cobalt import. In Pelobacter propionicus (strain DSM 2379 / NBRC 103807 / OttBd1), this protein is Cobalt transport protein CbiM 1 (cbim1).